A 470-amino-acid chain; its full sequence is Proline--tRNA ligase (470 aa).

The protein belongs to the class-II aminoacyl-tRNA synthetase family. ProS type 3 subfamily. In terms of assembly, homodimer.

The protein localises to the cytoplasm. It catalyses the reaction tRNA(Pro) + L-proline + ATP = L-prolyl-tRNA(Pro) + AMP + diphosphate. In terms of biological role, catalyzes the attachment of proline to tRNA(Pro) in a two-step reaction: proline is first activated by ATP to form Pro-AMP and then transferred to the acceptor end of tRNA(Pro). In Malacoplasma penetrans (strain HF-2) (Mycoplasma penetrans), this protein is Proline--tRNA ligase.